The sequence spans 697 residues: Polyribonucleotide nucleotidyltransferase (697 aa).

2 residues coordinate Mg(2+): Asp486 and Asp492. The KH domain occupies 553-612; that stretch reads PRIHTIKIHPDKIKDVIGKCGSVIRALTEETKTIIDIEDDGTVTVAATDSIKAQQAICRI. Residues 622–690 enclose the S1 motif domain; sequence GSIYHGKVTR…RQGRIRLSMK (69 aa).

This sequence belongs to the polyribonucleotide nucleotidyltransferase family. Component of the RNA degradosome, which is a multiprotein complex involved in RNA processing and mRNA degradation. It depends on Mg(2+) as a cofactor.

It localises to the cytoplasm. It carries out the reaction RNA(n+1) + phosphate = RNA(n) + a ribonucleoside 5'-diphosphate. Functionally, involved in mRNA degradation. Catalyzes the phosphorolysis of single-stranded polyribonucleotides processively in the 3'- to 5'-direction. The chain is Polyribonucleotide nucleotidyltransferase from Baumannia cicadellinicola subsp. Homalodisca coagulata.